The primary structure comprises 174 residues: MIFWKNFFQNSNINASSEKNFKKLIVLDKTCDKIEFKDIYLSSNKNINLYELEQLCDSVGWVKRPLKKVKIALKNSSIIISLIQKKDANSKLVGFARATSDNGFNATIWDVVIHPDFQGLGLGKVVIHQLIQQLRQAEISTITLFAEPDVVSFYKKLGFIKDPDGVKGMFWYPR.

In terms of domain architecture, N-acetyltransferase spans S42 to R174.

This sequence belongs to the acetyltransferase family. Ycf52 subfamily.

Its subcellular location is the plastid. The protein resides in the chloroplast. This is an uncharacterized protein from Pyropia yezoensis (Susabi-nori).